Here is a 346-residue protein sequence, read N- to C-terminus: uncharacterized protein (346 aa).

The signal sequence occupies residues 1-27 (MKFNKISLSVSTALLAAGLAVSGSANA).

This is an uncharacterized protein from Haemophilus influenzae (strain ATCC 51907 / DSM 11121 / KW20 / Rd).